A 179-amino-acid polypeptide reads, in one-letter code: Large ribosomal subunit protein uL5 (179 aa).

This sequence belongs to the universal ribosomal protein uL5 family. Part of the 50S ribosomal subunit; part of the 5S rRNA/L5/L18/L25 subcomplex. Contacts the 5S rRNA and the P site tRNA. Forms a bridge to the 30S subunit in the 70S ribosome.

This is one of the proteins that bind and probably mediate the attachment of the 5S RNA into the large ribosomal subunit, where it forms part of the central protuberance. In the 70S ribosome it contacts protein S13 of the 30S subunit (bridge B1b), connecting the 2 subunits; this bridge is implicated in subunit movement. Contacts the P site tRNA; the 5S rRNA and some of its associated proteins might help stabilize positioning of ribosome-bound tRNAs. The polypeptide is Large ribosomal subunit protein uL5 (Shewanella baltica (strain OS223)).